Reading from the N-terminus, the 193-residue chain is Cytidylate kinase (193 aa).

12 to 20 (GLAGSGTTT) lines the ATP pocket.

Belongs to the cytidylate kinase family. Type 2 subfamily.

Its subcellular location is the cytoplasm. The enzyme catalyses CMP + ATP = CDP + ADP. The catalysed reaction is dCMP + ATP = dCDP + ADP. This Thermococcus kodakarensis (strain ATCC BAA-918 / JCM 12380 / KOD1) (Pyrococcus kodakaraensis (strain KOD1)) protein is Cytidylate kinase.